The chain runs to 758 residues: 3-isopropylmalate dehydratase (758 aa).

[4Fe-4S] cluster is bound by residues C359, C420, and C423. A phosphoserine mark is found at S486 and S488.

The protein belongs to the aconitase/IPM isomerase family. The cofactor is [4Fe-4S] cluster.

It carries out the reaction (2R,3S)-3-isopropylmalate = (2S)-2-isopropylmalate. It functions in the pathway amino-acid biosynthesis; L-leucine biosynthesis; L-leucine from 3-methyl-2-oxobutanoate: step 2/4. Its function is as follows. Catalyzes the isomerization between 2-isopropylmalate and 3-isopropylmalate, via the formation of 2-isopropylmaleate. The chain is 3-isopropylmalate dehydratase (leu2) from Schizosaccharomyces pombe (strain 972 / ATCC 24843) (Fission yeast).